The sequence spans 360 residues: MPSTLQALTKKVLATQPVFKDDYCILERCGLWWHEAPITIHHTCIDKQILIKTASFKHGLTLNVALMKAVQENNHGLIELFTEWGADISFGLVTVNMECTQDLCQKLGARKALSENKILEIFYNVQYVKTSSNIILCHELLSDNPLFLNNAQLKLRIFGELDTLSINFTLDNISFNEMLTRYWYSMAILYKLTEAIQYFYQRYSHFKDWRLICGVAYNNVFDLHEIYNKEKTNIDIDEMMQLACMYDCNYTTIYYCCMLGADINRAMITSVMNFCEGNLFLCIDLGADAFEESMEIASQTNNWILINILLFKNYSPDSSLLSIKTTDPEKINALLDEEKYKSKNMLIYEESLFHIYGVNI.

Belongs to the asfivirus MGF 360 family.

Its function is as follows. Plays a role in virus cell tropism, and may be required for efficient virus replication in macrophages. This African swine fever virus (strain Badajoz 1971 Vero-adapted) (Ba71V) protein is Protein MGF 360-1L.